Here is a 213-residue protein sequence, read N- to C-terminus: Octanoyltransferase (213 aa).

The BPL/LPL catalytic domain maps to 32–207 (NSTLDEIWLV…NILALLNNPD (176 aa)). Substrate is bound by residues 71-78 (RGGQVTYH), 138-140 (SLG), and 151-153 (GLA). The Acyl-thioester intermediate role is filled by cysteine 169.

It belongs to the LipB family.

Its subcellular location is the cytoplasm. It catalyses the reaction octanoyl-[ACP] + L-lysyl-[protein] = N(6)-octanoyl-L-lysyl-[protein] + holo-[ACP] + H(+). Its pathway is protein modification; protein lipoylation via endogenous pathway; protein N(6)-(lipoyl)lysine from octanoyl-[acyl-carrier-protein]: step 1/2. Functionally, catalyzes the transfer of endogenously produced octanoic acid from octanoyl-acyl-carrier-protein onto the lipoyl domains of lipoate-dependent enzymes. Lipoyl-ACP can also act as a substrate although octanoyl-ACP is likely to be the physiological substrate. This chain is Octanoyltransferase, found in Shigella flexneri serotype 5b (strain 8401).